A 1592-amino-acid chain; its full sequence is Laminin subunit gamma-1 (1592 aa).

Residues 1 to 19 (MRAPVLAVLAVLLLGTVRA) form the signal peptide. A Laminin N-terminal domain is found at 29–268 (SPQRCMPEFV…AISDFAVGGR (240 aa)). N-linked (GlcNAc...) asparagine glycans are attached at residues asparagine 43 and asparagine 117. Cystine bridges form between cysteine 269–cysteine 278, cysteine 271–cysteine 288, cysteine 290–cysteine 299, cysteine 302–cysteine 322, cysteine 325–cysteine 334, cysteine 327–cysteine 350, cysteine 353–cysteine 362, cysteine 365–cysteine 378, cysteine 381–cysteine 393, cysteine 383–cysteine 399, cysteine 401–cysteine 410, cysteine 413–cysteine 425, cysteine 428–cysteine 439, cysteine 430–cysteine 446, cysteine 448–cysteine 457, and cysteine 460–cysteine 475. 4 Laminin EGF-like domains span residues 269–324 (CKCN…ECLP), 325–380 (CNCN…PCHA), 381–427 (CQCN…GCRP), and 428–477 (CACN…GCTP). The region spanning 504 to 672 (SGVEGWTAQQ…AGPSAPWVEI (169 aa)) is the Laminin IV type A domain. N-linked (GlcNAc...) asparagine glycosylation is found at asparagine 559 and asparagine 633. 24 cysteine pairs are disulfide-bonded: cysteine 707–cysteine 716, cysteine 709–cysteine 723, cysteine 725–cysteine 734, cysteine 737–cysteine 753, cysteine 756–cysteine 764, cysteine 758–cysteine 775, cysteine 778–cysteine 787, cysteine 790–cysteine 808, cysteine 811–cysteine 825, cysteine 813–cysteine 832, cysteine 835–cysteine 844, cysteine 847–cysteine 864, cysteine 867–cysteine 881, cysteine 869–cysteine 888, cysteine 890–cysteine 899, cysteine 902–cysteine 915, cysteine 918–cysteine 930, cysteine 920–cysteine 937, cysteine 939–cysteine 948, cysteine 951–cysteine 963, cysteine 966–cysteine 978, cysteine 968–cysteine 984, cysteine 986–cysteine 995, and cysteine 998–cysteine 1011. Laminin EGF-like domains lie at 707–755 (CTCN…DCQP), 756–810 (CPCP…PCRI), 811–866 (CECS…KCRA), 867–917 (CSCN…GCER), 918–965 (CDCH…GCKP), and 966–1013 (CDCD…GCQE). Asparagine 1005, asparagine 1041, asparagine 1048, asparagine 1090, asparagine 1144, asparagine 1158, asparagine 1188, asparagine 1206, asparagine 1253, asparagine 1363, and asparagine 1386 each carry an N-linked (GlcNAc...) asparagine glycan. Residues 1013–1592 (ECPACYRLVK…CYNTPIIEKP (580 aa)) are domain II and I. The stretch at 1018–1477 (YRLVKDKVNE…DEKMAEMASN (460 aa)) forms a coiled coil. Positions 1456–1472 (NQLKKKQAEAESDEKMA) are enriched in basic and acidic residues. A disordered region spans residues 1456-1489 (NQLKKKQAEAESDEKMAEMASNATKDAESNANNS). The span at 1476–1489 (SNATKDAESNANNS) shows a compositional bias: polar residues. 2 N-linked (GlcNAc...) asparagine glycosylation sites follow: asparagine 1477 and asparagine 1487. The stretch at 1515 to 1579 (VGQLTVLEKT…ANLEDIKNTL (65 aa)) forms a coiled coil.

In terms of assembly, laminin is a complex glycoprotein, consisting of three different polypeptide chains (alpha, beta, gamma), which are bound to each other by disulfide bonds into a cross-shaped molecule comprising one long and three short arms with globules at each end.

It is found in the secreted. It localises to the extracellular space. The protein localises to the extracellular matrix. Its subcellular location is the basement membrane. Binding to cells via a high affinity receptor, laminin is thought to mediate the attachment, migration and organization of cells into tissues during embryonic development by interacting with other extracellular matrix components. This is Laminin subunit gamma-1 (lamc1) from Xenopus tropicalis (Western clawed frog).